We begin with the raw amino-acid sequence, 198 residues long: Holliday junction branch migration complex subunit RuvA (198 aa).

The domain I stretch occupies residues 1-64 (MYEYIKGEYM…EDFIGLYGFE (64 aa)). The segment at 65–143 (SLEELDMFKL…SDELLNCIDE (79 aa)) is domain II. The tract at residues 144–154 (FDDVTQDNSLA) is flexible linker. Residues 154 to 198 (ALSEALSALISLGYTEKEAEKVLKDVDKSESVENIIKSALVKLMG) form a domain III region.

This sequence belongs to the RuvA family. In terms of assembly, homotetramer. Forms an RuvA(8)-RuvB(12)-Holliday junction (HJ) complex. HJ DNA is sandwiched between 2 RuvA tetramers; dsDNA enters through RuvA and exits via RuvB. An RuvB hexamer assembles on each DNA strand where it exits the tetramer. Each RuvB hexamer is contacted by two RuvA subunits (via domain III) on 2 adjacent RuvB subunits; this complex drives branch migration. In the full resolvosome a probable DNA-RuvA(4)-RuvB(12)-RuvC(2) complex forms which resolves the HJ.

It is found in the cytoplasm. Functionally, the RuvA-RuvB-RuvC complex processes Holliday junction (HJ) DNA during genetic recombination and DNA repair, while the RuvA-RuvB complex plays an important role in the rescue of blocked DNA replication forks via replication fork reversal (RFR). RuvA specifically binds to HJ cruciform DNA, conferring on it an open structure. The RuvB hexamer acts as an ATP-dependent pump, pulling dsDNA into and through the RuvAB complex. HJ branch migration allows RuvC to scan DNA until it finds its consensus sequence, where it cleaves and resolves the cruciform DNA. The sequence is that of Holliday junction branch migration complex subunit RuvA from Clostridium botulinum (strain Alaska E43 / Type E3).